We begin with the raw amino-acid sequence, 271 residues long: MSRIQNTFAALAAQGRKGLIPFITAGDPDPAKTVELMHALAEGGADVIELGVPFSDPMADGPVIQRSSERALAKGVTLHSVLDDVKRFRARDQKTPVVLMGYANPIERMGADAFAAAARDAGVDGVLVVDYPPEESHDFAAKMRAAGIDPIFLLAPTSTDDRIAAVGQVASGYVYYVSLKGVTGAANLDVSSIAGKIPAIKSRVPLPVGVGFGIRDAATARAVAEVADAVVIGSRLVQLLEQAAPERAAAELAGFVAELRVAIDGAAKPAA.

Residues Glu-49 and Asp-60 each act as proton acceptor in the active site.

Belongs to the TrpA family. In terms of assembly, tetramer of two alpha and two beta chains.

It catalyses the reaction (1S,2R)-1-C-(indol-3-yl)glycerol 3-phosphate + L-serine = D-glyceraldehyde 3-phosphate + L-tryptophan + H2O. It functions in the pathway amino-acid biosynthesis; L-tryptophan biosynthesis; L-tryptophan from chorismate: step 5/5. Its function is as follows. The alpha subunit is responsible for the aldol cleavage of indoleglycerol phosphate to indole and glyceraldehyde 3-phosphate. The chain is Tryptophan synthase alpha chain from Burkholderia pseudomallei (strain K96243).